Reading from the N-terminus, the 1205-residue chain is Caskin-2 (1205 aa).

ANK repeat units follow at residues 48 to 77 (DGFSALHHAALSGNSELLLLLLEMQASVDI), 81 to 110 (NGMRPLHYAAWQGQPEPVRLLLRASASVNA), 114 to 143 (DGQIPLHLAAQYGHYEVSETLLQHQSNPCH), 147 to 176 (GKKTPLDLACEFGRVKVVQLLLNSHLCVSL), 188 to 217 (NFTTPLHLAAKNGHLEVIRLLLKLGIEINK), and 220 to 249 (KMGTALHEAALCGKTEVVKLLIENGVDVNI). An SH3 domain is found at 281 to 347 (SGILKVRALK…PPSIVEVISK (67 aa)). Polar residues-rich tracts occupy residues 377–388 (SPGSQLGINPDT) and 398–411 (GSESSVRSAGSGQS). The segment at 377–411 (SPGSQLGINPDTSVAGDRHSVGSESSVRSAGSGQS) is disordered. SAM domains are found at residues 468-531 (KDAE…LIVA) and 537-601 (QIPV…LLDL). Residues 666 to 687 (RRSFSQESISSRSQGSGHSQES) show a composition bias toward low complexity. Disordered regions lie at residues 666–689 (RRSFSQESISSRSQGSGHSQESAS), 784–964 (RPGR…QRHL), 984–1054 (QIAA…SQEP), and 1132–1155 (SEASSREQTCIPQQSISNSDKGPP). Positions 823-840 (SSMSSAEGQSPEGQSSVK) are enriched in polar residues. The span at 908 to 919 (ISSQHSSSESIP) shows a compositional bias: low complexity. Residues 942-959 (DATSELSPTQESQLQSAE) are compositionally biased toward polar residues. The span at 1009 to 1037 (KNEEHDFNLTESDTVKRRPKVKEKEEESP) shows a compositional bias: basic and acidic residues. Composition is skewed to polar residues over residues 1042–1054 (ANNSPSLIPSQEP) and 1137–1155 (REQTCIPQQSISNSDKGPP).

In Xenopus laevis (African clawed frog), this protein is Caskin-2 (caskin2).